Consider the following 455-residue polypeptide: Golgi pH regulator A (455 aa).

Helical transmembrane passes span 5 to 25 (IDSS…WLFF), 46 to 66 (VTFA…LGVL), 79 to 99 (LCVI…YFIV), 114 to 134 (CLLW…FPIL), and 150 to 170 (VGVI…VNCP). N-linked (GlcNAc...) asparagine glycosylation is found at asparagine 180 and asparagine 243. The next 4 helical transmembrane spans lie at 290 to 310 (GYFF…NIVF), 343 to 363 (ISFI…LITL), 378 to 398 (VIVL…VLLI), and 425 to 445 (WFDV…YLAH).

Belongs to the Golgi pH regulator (TC 1.A.38) family. As to quaternary structure, homotrimer. Interacts with RABL3; the interaction stabilizes GPR89A. Ubiquitous.

It localises to the golgi apparatus membrane. It catalyses the reaction iodide(out) = iodide(in). The catalysed reaction is chloride(in) = chloride(out). It carries out the reaction bromide(in) = bromide(out). The enzyme catalyses fluoride(in) = fluoride(out). In terms of biological role, voltage-gated channel that enables the transfer of monoatomic anions such as iodide, chloride, bromide and fluoride which may function in counter-ion conductance and participates in Golgi acidification. Plays a role in lymphocyte development, probably by acting as a RABL3 effector in hematopoietic cells. The sequence is that of Golgi pH regulator A from Homo sapiens (Human).